The primary structure comprises 423 residues: Sphingomyelin phosphodiesterase 2 (423 aa).

A Mg(2+)-binding site is contributed by glutamate 49. The Proton acceptor role is filled by histidine 272. 2 consecutive transmembrane segments (helical) span residues 330–350 and 354–374; these read VIGLGLLLLALLCVLAAGGGA and AILLWTPSVGLVLWAGAFYLF. Positions 400–423 are disordered; sequence QDLGPEPQPALLLGQQEGDRTKEQ.

Belongs to the neutral sphingomyelinase family. The cofactor is Mg(2+).

It localises to the cell membrane. It carries out the reaction a sphingomyelin + H2O = phosphocholine + an N-acylsphing-4-enine + H(+). The enzyme catalyses an N-(acyl)-sphingosylphosphocholine + H2O = an N-acyl-sphingoid base + phosphocholine + H(+). The catalysed reaction is 1-O-octadecyl-sn-glycero-3-phosphocholine + H2O = 1-O-octadecyl-sn-glycerol + phosphocholine + H(+). It catalyses the reaction 1-O-hexadecyl-sn-glycero-3-phosphocholine + H2O = 1-O-hexadecyl-sn-glycerol + phosphocholine + H(+). It carries out the reaction 1-hexadecanoyl-sn-glycero-3-phosphocholine + H2O = 1-hexadecanoyl-sn-glycerol + phosphocholine + H(+). The enzyme catalyses a sphingosylphosphocholine + H2O = a sphingoid base + phosphocholine + H(+). Its pathway is lipid metabolism; sphingolipid metabolism. Functionally, catalyzes, at least in vitro, the hydrolysis of sphingomyelin to form ceramide and phosphocholine. Also hydrolyzes 1-O-alkyl-2-lyso-sn-glycero-3-phosphocholine (lyso-platelet-activating factor) in vivo. Also acts on 1-acyl-2-lyso-sn-glycero-3-phosphocholine (lyso-PC) and sphingosylphosphocholine. This is Sphingomyelin phosphodiesterase 2 from Homo sapiens (Human).